Consider the following 351-residue polypeptide: Probable cell division control protein 7 homolog 2 (351 aa).

The Protein kinase domain occupies 21-341 (YTPIEKIGEG…ASDALSHPFF (321 aa)). ATP is bound by residues 27-35 (IGEGSFSVV) and lysine 50. Aspartate 137 acts as the Proton acceptor in catalysis.

It belongs to the protein kinase superfamily. Ser/Thr protein kinase family. CDC7 subfamily. The cofactor is Mg(2+).

The enzyme catalyses L-seryl-[protein] + ATP = O-phospho-L-seryl-[protein] + ADP + H(+). It carries out the reaction L-threonyl-[protein] + ATP = O-phospho-L-threonyl-[protein] + ADP + H(+). Its function is as follows. Serine/threonine-protein kinase. Needed for the initiation of DNA synthesis during mitosis as well as for synaptonemal complex formation and commitment to recombination during meiosis. The sequence is that of Probable cell division control protein 7 homolog 2 (CDC7-2) from Encephalitozoon cuniculi (strain GB-M1) (Microsporidian parasite).